Consider the following 185-residue polypeptide: Tetrahydromethanopterin S-methyltransferase subunit A 2 (185 aa).

The Cytoplasmic portion of the chain corresponds to 1–21 (MVDKKVDKKPVPEDWPHIVGD). The helical transmembrane segment at 22-38 (YVVGDAESPVAVVTLGS) threads the bilayer. Over 39–185 (HMEDEPVRAG…LNKNKPDENT (147 aa)) the chain is Extracellular. His-88 contributes to the 5-hydroxybenzimidazolylcob(I)amide binding site.

The protein belongs to the MtrA family. In terms of assembly, the complex is composed of 8 subunits; MtrA, MtrB, MtrC, MtrD, MtrE, MtrF, MtrG and MtrH. 5-hydroxybenzimidazolylcob(I)amide is required as a cofactor.

It is found in the cell membrane. It carries out the reaction 5-methyl-5,6,7,8-tetrahydromethanopterin + coenzyme M + 2 Na(+)(in) = 5,6,7,8-tetrahydromethanopterin + methyl-coenzyme M + 2 Na(+)(out). It functions in the pathway one-carbon metabolism; methanogenesis from CO(2); methyl-coenzyme M from 5,10-methylene-5,6,7,8-tetrahydromethanopterin: step 2/2. Its function is as follows. Part of a complex that catalyzes the formation of methyl-coenzyme M and tetrahydromethanopterin from coenzyme M and methyl-tetrahydromethanopterin. This is an energy-conserving, sodium-ion translocating step. This Methanothermobacter marburgensis (strain ATCC BAA-927 / DSM 2133 / JCM 14651 / NBRC 100331 / OCM 82 / Marburg) (Methanobacterium thermoautotrophicum) protein is Tetrahydromethanopterin S-methyltransferase subunit A 2.